A 222-amino-acid polypeptide reads, in one-letter code: MHLTWLGHACVLLTGTKKVLIDPFIPEGSVAGTDPDLVLVTHGHFDHMGEAVTLKKPTVAIGELARYLQAKGVPAEGMNIGGTIESGGIMVTMTPALHTSGIDDPAGAGCAGTAAGFVVRMDGVCVYHAGDTGLFSDMKLIGELYHPDVALLPIGGRYTMGTKEAMVAAQFIGAKTVIPIHYNTWEKIAADANGFKTAIERSTDLSVFLLGPGESMDIPPSR.

The protein belongs to the UPF0173 family.

The polypeptide is UPF0173 metal-dependent hydrolase Mboo_0816 (Methanoregula boonei (strain DSM 21154 / JCM 14090 / 6A8)).